Here is a 127-residue protein sequence, read N- to C-terminus: uncharacterized protein (127 aa).

The first 16 residues, 1–16 (MLKKIIFGITISLTTG), serve as a signal peptide directing secretion. Cysteine 17 carries the N-palmitoyl cysteine lipid modification. Cysteine 17 carries the S-diacylglycerol cysteine lipid modification. Positions 56-101 (EVREEIQKYRVEIVDINKKKRELYNRLSKEAQSFLAEQQKYKQKLS) form a coiled coil. Residues 102–127 (IPKLLIENDPKNNTANSKDNNDKDMK) are disordered.

The protein resides in the cell membrane. This is an uncharacterized protein from Rickettsia prowazekii (strain Madrid E).